Here is a 435-residue protein sequence, read N- to C-terminus: ATP-dependent RNA helicase SUB2 (435 aa).

A disordered region spans residues 1–40 (MSHEGQEELLDYSDSEEIAVPTTTAPSAAAGEGANDKEAD). The segment covering 7-17 (EELLDYSDSEE) has biased composition (acidic residues). The span at 19–33 (AVPTTTAPSAAAGEG) shows a compositional bias: low complexity. The short motif at 51-79 (TGFRDFLLKPELLRAIGDCGFEHPSEVQQ) is the Q motif element. Residues 82-257 (IPQSILGTDV…KKFMQNPLEI (176 aa)) enclose the Helicase ATP-binding domain. Residue 95–102 (AKSGLGKT) participates in ATP binding. The DECD box motif lies at 204–207 (DECD). Positions 269–430 (GLQQYYIKLD…EFPEEGVDPS (162 aa)) constitute a Helicase C-terminal domain.

It belongs to the DEAD box helicase family. DECD subfamily.

Its subcellular location is the nucleus. The catalysed reaction is ATP + H2O = ADP + phosphate + H(+). In terms of biological role, ATP-binding RNA helicase involved in transcription elongation and required for the export of mRNA out of the nucleus. SUB2 also plays a role in pre-mRNA splicing and spliceosome assembly. May be involved in rDNA and telomeric silencing, and maintenance of genome integrity. This Debaryomyces hansenii (strain ATCC 36239 / CBS 767 / BCRC 21394 / JCM 1990 / NBRC 0083 / IGC 2968) (Yeast) protein is ATP-dependent RNA helicase SUB2 (SUB2).